Here is a 1515-residue protein sequence, read N- to C-terminus: Homeobox protein cut-like 1 (1515 aa).

Residues 56–361 (LLKSFQGEID…VKKELNTLKS (306 aa)) are a coiled coil. Over residues 393–405 (ENATLRISNSDLS) the composition is skewed to polar residues. 4 disordered regions span residues 393–453 (ENAT…SPAG), 509–546 (PYSTNSISSPSPLQQSPDVNGMAPSPSQSESAGSISEG), 644–666 (PKRRNRSEGNITTRIRASETGSD), and 680–702 (LQVQKTAEPVQTSSTSSSGNSDD). Positions 422–432 (GPLPASPPPQL) are enriched in pro residues. The residue at position 427 (S427) is a Phosphoserine. Polar residues predominate over residues 436 to 447 (TGEQVSNTNGTH). The segment covering 514 to 544 (SISSPSPLQQSPDVNGMAPSPSQSESAGSIS) has biased composition (low complexity). Positions 540–627 (AGSISEGEEI…ILALRSIQGR (88 aa)) form a DNA-binding region, CUT 1. At S761 the chain carries Phosphoserine. 2 disordered regions span residues 769 to 871 (PETS…SASA) and 884 to 923 (YSQSSELSLTGASRSETPQNSPLPSSPIVPMAKPAKPSVP). Glycyl lysine isopeptide (Lys-Gly) (interchain with G-Cter in SUMO2) cross-links involve residues K783, K809, and K840. Basic and acidic residues predominate over residues 828–852 (PERRNLTSSEETKADETTASGKERA). 2 stretches are compositionally biased toward polar residues: residues 853-868 (GSSQPRAERSQLQGPS) and 884-906 (YSQSSELSLTGASRSETPQNSPL). Residue S904 is modified to Phosphoserine. The segment at residues 929–1016 (QYEVYMYQEV…QGVLPVQGQQ (88 aa)) is a DNA-binding region (CUT 2). Residues 1032-1044 (QQGCVSSESTPKT) are compositionally biased toward polar residues. A disordered region spans residues 1032–1105 (QQGCVSSEST…QPTTPLPLSG (74 aa)). A compositionally biased stretch (low complexity) spans 1045 to 1061 (SASCSPAPESPMSSSES). Phosphoserine occurs at positions 1054 and 1064. The segment at residues 1112–1199 (QELVAMSPEL…VEKLMDMKRM (88 aa)) is a DNA-binding region (CUT 3). The tract at residues 1207 to 1242 (RRHSSVSDSQPCEPPSVGIDYSQGASPQPQHQLKKP) is disordered. Positions 1239-1298 (LKKPRVVLAPEEKEALKRAYQQKPYPSPKTIEELATQLNLKTSTVINWFHNYRSRIRREL) form a DNA-binding region, homeobox. At S1265 the chain carries Phosphoserine. A Glycyl lysine isopeptide (Lys-Gly) (interchain with G-Cter in SUMO2) cross-link involves residue K1279. A disordered region spans residues 1307–1488 (SQGQAGASDS…AGARDNPVRK (182 aa)). Residues 1313 to 1328 (ASDSPSARSSRAAPSS) are compositionally biased toward low complexity. A compositionally biased stretch (acidic residues) spans 1331–1343 (DSCDGVEATDAEE). Phosphoserine is present on S1332. The span at 1365-1378 (ADREEATQPAEKAK) shows a compositional bias: basic and acidic residues. Over residues 1406–1468 (ADAPAPVPSL…ANAPARRPSS (63 aa)) the composition is skewed to low complexity. Residues S1468, S1496, and S1506 each carry the phosphoserine modification.

Belongs to the CUT homeobox family. Interacts with BANP. Interacts with SATB1 (via DNA-binding domains); the interaction inhibits the attachment of both proteins to DNA. Post-translationally, phosphorylated by PKA. As cells progress into S phase, a fraction of CUX1 molecules is proteolytically processed into N-terminally truncated proteins of 110 kDa by CTSL. Cell cycle-dependent processing of CUX1 serves to generate a CDP/Cux p110 with distinct DNA binding and transcriptional properties. As to expression, testis-specific where it is expressed in germ cells.

It is found in the nucleus. Its function is as follows. Transcription factor involved in the control of neuronal differentiation in the brain. Regulates dendrite development and branching, and dendritic spine formation in cortical layers II-III. Also involved in the control of synaptogenesis. In addition, it has probably a broad role in mammalian development as a repressor of developmentally regulated gene expression. May act by preventing binding of positively-activing CCAAT factors to promoters. Component of nf-munr repressor; binds to the matrix attachment regions (MARs) (5' and 3') of the immunoglobulin heavy chain enhancer. Represses T-cell receptor (TCR) beta enhancer function by binding to MARbeta, an ATC-rich DNA sequence located upstream of the TCR beta enhancer. Binds to the TH enhancer; may require the basic helix-loop-helix protein TCF4 as a coactivator. Plays a role in cell cycle progression, in particular at the G1/S transition. As cells progress into S phase, a fraction of CUX1 molecules is proteolytically processed into N-terminally truncated proteins of 110 kDa. While CUX1 only transiently binds to DNA and carries the CCAAT-displacement activity, CDP/Cux p110 makes a stable interaction with DNA and stimulates expression of genes such as POLA1. The sequence is that of Homeobox protein cut-like 1 from Mus musculus (Mouse).